A 613-amino-acid polypeptide reads, in one-letter code: Zinc metalloproteinase-disintegrin-like EoVMP2 (613 aa).

An N-terminal signal peptide occupies residues 1 to 20; the sequence is MMQVLLVTICLAVFPYQGSS. Residues 21–194 constitute a propeptide that is removed on maturation; that stretch reads IILESGNVND…EASQLFATSE (174 aa). The residue at position 195 (Q195) is a Pyrrolidone carboxylic acid. In terms of domain architecture, Peptidase M12B spans 201–397; it reads RYIEFFIVVD…RNPKCMINKP (197 aa). Residue E204 coordinates Ca(2+). N219 carries N-linked (GlcNAc...) asparagine glycosylation. D288 provides a ligand contact to Ca(2+). Cystine bridges form between C312-C392, C352-C376, and C354-C359. H337 lines the Zn(2+) pocket. E338 is an active-site residue. Residues H341 and H347 each contribute to the Zn(2+) site. N-linked (GlcNAc...) asparagine glycosylation occurs at N375. 8 residues coordinate Ca(2+): C392, N395, V407, N410, L412, E414, E417, and D420. Residues 405-491 form the Disintegrin domain; it reads PPVCGNGLLE…DCPIDGFHAN (87 aa). Cystine bridges form between C408–C437, C419–C432, C421–C427, C431–C454, C445–C451, C450–C476, C463–C483, C470–C502, C495–C507, C514–C564, C529–C575, C542–C552, C559–C601, and C595–C606. Residues 469-471 carry the D/ECD-tripeptide motif; sequence DCD.

The protein belongs to the venom metalloproteinase (M12B) family. P-III subfamily. P-IIIa sub-subfamily. Monomer. It depends on Zn(2+) as a cofactor. As to expression, expressed by the venom gland.

It localises to the secreted. Functionally, snake venom zinc metalloprotease that possesses high hemorrhagic activity. It inhibits collagen-induced platelet aggregation and activates prothrombin (F2). The chain is Zinc metalloproteinase-disintegrin-like EoVMP2 (Svmp3-Eoc22) from Echis ocellatus (Ocellated saw-scaled viper).